The following is a 292-amino-acid chain: Shikimate dehydrogenase (NADP(+)) (292 aa).

Residues 22–24 (SLS) and Ser69 each bind shikimate. The Proton acceptor role is filled by Lys73. The shikimate site is built by Asn94 and Asp111. Residues 135–139 (GVGGA) and Ile236 contribute to the NADP(+) site. Tyr238 contributes to the shikimate binding site. Gly260 contributes to the NADP(+) binding site.

It belongs to the shikimate dehydrogenase family. Homodimer.

It catalyses the reaction shikimate + NADP(+) = 3-dehydroshikimate + NADPH + H(+). The protein operates within metabolic intermediate biosynthesis; chorismate biosynthesis; chorismate from D-erythrose 4-phosphate and phosphoenolpyruvate: step 4/7. In terms of biological role, involved in the biosynthesis of the chorismate, which leads to the biosynthesis of aromatic amino acids. Catalyzes the reversible NADPH linked reduction of 3-dehydroshikimate (DHSA) to yield shikimate (SA). The chain is Shikimate dehydrogenase (NADP(+)) from Streptococcus pyogenes serotype M3 (strain ATCC BAA-595 / MGAS315).